A 340-amino-acid chain; its full sequence is MSESLAEVVLSLDEVHALALRVLTHNGMSAAHAQAIANVITQGQRDECHSHGVYRLLVCVRSLKKGKVDPQAVPTLRRLSSSIVAVDAHRGFSLLSFETGLPVLVEMAKQHGIAAMAINHCYHFSALWPEVEAIAAEGLVGIAMNPSHSWVAPEGGREPVFGTNPIAFAWPRPDGVPFVFDFATSAIARGDIELHAKQGKAIPPHWAIDADGQPTTDPKAALQGAMRTFGGHKGSALAAMVELLGGALIGDMTSRESMAFDEGVGATPCHGELVIAFDPKVFLGDELDAGLARGERMFASITGQGARLPSQRRFDARARSIAHGVRIPKALYDEILTLLD.

S50 acts as the Charge relay system in catalysis. The active-site Proton donor is the H51. R55 provides a ligand contact to substrate. 123–127 (HFSAL) is an NADP(+) binding site. T163 contacts substrate. 181–183 (DFA) is a binding site for NADP(+). 189–190 (RG) is a substrate binding site. D191 serves as the catalytic Charge relay system. NADP(+) contacts are provided by residues 232–233 (HK) and 307–313 (RLPSQRR).

This sequence belongs to the LDH2/MDH2 oxidoreductase family. In terms of assembly, homodimer.

The catalysed reaction is L-proline + NAD(+) = 1-pyrroline-2-carboxylate + NADH + H(+). It carries out the reaction L-proline + NADP(+) = 1-pyrroline-2-carboxylate + NADPH + H(+). In terms of biological role, catalyzes the reduction of Delta(1)-pyrroline-2-carboxylate (Pyr2C) to L-proline, using NADPH as the electron donor. May be involved in a degradation pathway that converts trans-3-hydroxy-L-proline (t3LHyp) to L-proline. This Burkholderia ambifaria (strain ATCC BAA-244 / DSM 16087 / CCUG 44356 / LMG 19182 / AMMD) (Burkholderia cepacia (strain AMMD)) protein is Delta(1)-pyrroline-2-carboxylate reductase 1.